Reading from the N-terminus, the 262-residue chain is Acyl-[acyl-carrier-protein]--UDP-N-acetylglucosamine O-acyltransferase (262 aa).

The protein belongs to the transferase hexapeptide repeat family. LpxA subfamily. As to quaternary structure, homotrimer.

Its subcellular location is the cytoplasm. It carries out the reaction a (3R)-hydroxyacyl-[ACP] + UDP-N-acetyl-alpha-D-glucosamine = a UDP-3-O-[(3R)-3-hydroxyacyl]-N-acetyl-alpha-D-glucosamine + holo-[ACP]. It functions in the pathway glycolipid biosynthesis; lipid IV(A) biosynthesis; lipid IV(A) from (3R)-3-hydroxytetradecanoyl-[acyl-carrier-protein] and UDP-N-acetyl-alpha-D-glucosamine: step 1/6. Involved in the biosynthesis of lipid A, a phosphorylated glycolipid that anchors the lipopolysaccharide to the outer membrane of the cell. The chain is Acyl-[acyl-carrier-protein]--UDP-N-acetylglucosamine O-acyltransferase from Wigglesworthia glossinidia brevipalpis.